Here is a 318-residue protein sequence, read N- to C-terminus: Taste receptor type 2 member 7 (318 aa).

Topologically, residues 1–9 (MADKVQTTL) are extracellular. The helical transmembrane segment at 10–30 (LFLAVGEFSVGILGNAFIGLV) threads the bilayer. Over 31 to 55 (NCMDWVKKRKIASIDLILTSLAISR) the chain is Cytoplasmic. Residues 56–76 (ICLLCIILLDCFTLVLYPDVY) form a helical membrane-spanning segment. Topologically, residues 77–94 (ATGKEMRIIDFFWTLTNH) are extracellular. Residues 95 to 115 (LSIWFATCLSIYYFFKIGNFF) form a helical membrane-spanning segment. Residues 116–128 (HPLFLWMKWRIDR) lie on the Cytoplasmic side of the membrane. Residues 129 to 149 (VISWILLGCVVLSVFISLPAT) form a helical membrane-spanning segment. Over 150-187 (ENLNADFRFCVKAKRKTNLTWSCRVNKTQHASTKLFLN) the chain is Extracellular. N167 and N175 each carry an N-linked (GlcNAc...) asparagine glycan. Residues 188-208 (LATLLPFCVCLMSFFLLILSL) form a helical membrane-spanning segment. Topologically, residues 209–235 (RRHIRRMQLSATGCRDPSTEAHVRALK) are cytoplasmic. A helical membrane pass occupies residues 236–256 (AVISFLLLFIAYYLSFLIATS). At 257–266 (SYFMPETELA) the chain is on the extracellular side. The helical transmembrane segment at 267 to 287 (VIFGESIALIYPSSHSFILIL) threads the bilayer. At 288–318 (GNNKLRYVSLKVIWKVMSILKGRKFQQHKQI) the chain is on the cytoplasmic side.

This sequence belongs to the G-protein coupled receptor T2R family.

It localises to the membrane. Gustducin-coupled receptor implicated in the perception of bitter compounds in the oral cavity and the gastrointestinal tract. Signals through PLCB2 and the calcium-regulated cation channel TRPM5. The chain is Taste receptor type 2 member 7 (TAS2R7) from Gorilla gorilla gorilla (Western lowland gorilla).